Consider the following 76-residue polypeptide: UPF0729 protein C18orf32 (76 aa).

Residues 1–37 (MVCIPCIVIPVLLWIYKKFLEPYIYPLVSPFVSRIWP) are necessary for its localzation to the endoplasmic reticulum and lipid droplets. The segment at 46–76 (DTNKGKVNFKGADMNGLPTKGPTEICDKKKD) is disordered.

It belongs to the UPF0729 family. Interacts with DERL1 and AMFR. In terms of processing, undergoes ER-associated degradation (ERAD).

It localises to the endoplasmic reticulum. The protein localises to the lipid droplet. Its function is as follows. May activate the NF-kappa-B signaling pathway. The chain is UPF0729 protein C18orf32 (C18orf32) from Homo sapiens (Human).